Here is a 363-residue protein sequence, read N- to C-terminus: DNA replication and repair protein RecF (363 aa).

30–37 (GSNGSGKT) is a binding site for ATP.

It belongs to the RecF family.

Its subcellular location is the cytoplasm. Functionally, the RecF protein is involved in DNA metabolism; it is required for DNA replication and normal SOS inducibility. RecF binds preferentially to single-stranded, linear DNA. It also seems to bind ATP. The sequence is that of DNA replication and repair protein RecF from Photorhabdus laumondii subsp. laumondii (strain DSM 15139 / CIP 105565 / TT01) (Photorhabdus luminescens subsp. laumondii).